The following is a 150-amino-acid chain: Dual specificity protein phosphatase 23 (150 aa).

The region spanning 7–150 (NFSWVLPGRL…AVFQFYQRTK (144 aa)) is the Tyrosine-protein phosphatase domain. C95 functions as the Phosphocysteine intermediate in the catalytic mechanism.

The protein belongs to the protein-tyrosine phosphatase family. Non-receptor class dual specificity subfamily. As to expression, widely expressed.

It is found in the cytoplasm. It localises to the cytosol. Its subcellular location is the nucleus. It carries out the reaction O-phospho-L-tyrosyl-[protein] + H2O = L-tyrosyl-[protein] + phosphate. The catalysed reaction is O-phospho-L-seryl-[protein] + H2O = L-seryl-[protein] + phosphate. The enzyme catalyses O-phospho-L-threonyl-[protein] + H2O = L-threonyl-[protein] + phosphate. Functionally, protein phosphatase that mediates dephosphorylation of proteins phosphorylated on Tyr and Ser/Thr residues. In vitro, it can dephosphorylate p44-ERK1 (MAPK3) but not p54 SAPK-beta (MAPK10) in vitro. Able to enhance activation of JNK and p38 (MAPK14). The sequence is that of Dual specificity protein phosphatase 23 (Dusp23) from Mus musculus (Mouse).